We begin with the raw amino-acid sequence, 1158 residues long: Hephaestin (1158 aa).

The signal sequence occupies residues 1–23 (MESGHLLWALLFMQSLWPQLTDG). Plastocyanin-like domains are found at residues 24 to 206 (ATRV…LITC), 218 to 366 (QRQD…VKSC), 370 to 560 (PPVD…LLVC), 570 to 718 (KQKG…VSQC), 731 to 903 (AARI…LAIC), and 911 to 1067 (HGGR…SRTE). Residues 24–1110 (ATRVYYLGIR…PIKNVEMLAS (1087 aa)) lie on the Extracellular side of the membrane. Na(+)-binding residues include Gly70 and Tyr73. Positions 126 and 128 each coordinate Cu(2+). An O2-binding site is contributed by His126. Ca(2+) is bound by residues Lys134, Asp152, and Asp153. Residue Asn164 is glycosylated (N-linked (GlcNAc...) asparagine). An intrachain disulfide couples Cys180 to Cys206. Residues His186 and His188 each contribute to the Cu(2+) site. His186 is a binding site for O2. N-linked (GlcNAc...) asparagine glycosylation is present at Asn236. Ser265 lines the Na(+) pocket. The cysteines at positions 285 and 366 are disulfide-linked. Positions 304, 347, and 352 each coordinate Cu(2+). Phe416, Gly425, and Tyr428 together coordinate Na(+). Cys534 and Cys560 are oxidised to a cystine. Asn588 is a glycosylation site (N-linked (GlcNAc...) asparagine). Residue Ser617 participates in Na(+) binding. Cys637 and Cys718 are joined by a disulfide. Residues His656, Cys699, His704, and Met709 each coordinate Cu(2+). N-linked (GlcNAc...) asparagine glycosylation is found at Asn714 and Asn758. Na(+)-binding residues include Phe769 and Gly778. Asn829 and Asn873 each carry an N-linked (GlcNAc...) asparagine glycan. A disulfide bridge links Cys877 with Cys903. N-linked (GlcNAc...) asparagine glycosylation is present at Asn931. Cu(2+)-binding residues include His1000, His1003, His1005, His1045, Cys1046, His1047, His1051, and Met1056. O2 is bound by residues His1003 and His1005. His1047 is an O2 binding site. The helical transmembrane segment at 1111–1131 (VLVAISVTLLLVVLALGGVVW) threads the bilayer. Topologically, residues 1132–1158 (YQHRQRKLRRNRRSILDDSFKLLSFKQ) are cytoplasmic. Phosphoserine occurs at positions 1145, 1150, and 1155.

Belongs to the multicopper oxidase family. As to quaternary structure, part of a complex composed of SLC40A1/ferroportin, TF/transferrin and HEPH/hephaestin that transfers iron from cells to transferrin. The cofactor is Cu cation. Expressed by intestinal absorptive cells (at protein level). Also detected in breast, colon, bone trabecular cells and fibroblasts.

It localises to the basolateral cell membrane. It carries out the reaction 4 Fe(2+) + O2 + 4 H(+) = 4 Fe(3+) + 2 H2O. Functionally, plasma membrane ferroxidase that mediates the extracellular conversion of ferrous/Fe(2+) iron into its ferric/Fe(3+) form. Couples ferroportin which specifically exports ferrous/Fe(2+) iron from cells to transferrin that only binds and shuttles extracellular ferric/Fe(3+) iron throughout the body. By helping iron transfer from cells to blood mainly contributes to dietary iron absorption by the intestinal epithelium and more generally regulates iron levels in the body. The sequence is that of Hephaestin from Homo sapiens (Human).